Consider the following 282-residue polypeptide: Shikimate dehydrogenase (NADP(+)) (282 aa).

Residues 18–20 (SRS) and Thr-65 each bind shikimate. Lys-69 serves as the catalytic Proton acceptor. Residues Asn-90 and Asp-106 each coordinate shikimate. Residues 134–138 (GAGGA), 158–163 (NRTAAR), and Ile-223 each bind NADP(+). Residue Tyr-225 participates in shikimate binding. Gly-246 contacts NADP(+).

The protein belongs to the shikimate dehydrogenase family. Homodimer.

It carries out the reaction shikimate + NADP(+) = 3-dehydroshikimate + NADPH + H(+). Its pathway is metabolic intermediate biosynthesis; chorismate biosynthesis; chorismate from D-erythrose 4-phosphate and phosphoenolpyruvate: step 4/7. Involved in the biosynthesis of the chorismate, which leads to the biosynthesis of aromatic amino acids. Catalyzes the reversible NADPH linked reduction of 3-dehydroshikimate (DHSA) to yield shikimate (SA). This Methylobacterium radiotolerans (strain ATCC 27329 / DSM 1819 / JCM 2831 / NBRC 15690 / NCIMB 10815 / 0-1) protein is Shikimate dehydrogenase (NADP(+)).